The sequence spans 152 residues: Proteolipid protein 2 (152 aa).

The MARVEL domain maps to 19-137 (FSRTRKGFLL…DAYITFPLRQ (119 aa)). 3 helical membrane-spanning segments follow: residues 25 to 45 (GFLL…FSTS), 48 to 68 (GYSF…VVYM), and 85 to 105 (FFRT…VLVE). N-linked (GlcNAc...) asparagine glycosylation is present at Asn108. A helical membrane pass occupies residues 112-132 (IAAGALGLCAAGLFGYDAYIT).

It localises to the membrane. May play a role in cell differentiation in the intestinal epithelium. This is Proteolipid protein 2 (PLP2) from Bos taurus (Bovine).